A 538-amino-acid polypeptide reads, in one-letter code: MFS-type transporter tndD (538 aa).

A disordered region spans residues M1–I42. N-linked (GlcNAc...) asparagine glycosylation is found at N21 and N71. The next 11 membrane-spanning stretches (helical) occupy residues V81 to G101, L115 to L135, I153 to A173, G203 to A223, W235 to L255, P309 to F329, G348 to V368, L394 to S414, I422 to I442, S444 to V464, and L485 to A505.

Belongs to the major facilitator superfamily.

The protein localises to the membrane. Functionally, MFS-type transporter; part of the gene cluster that mediates the biosynthesis of talaronoid C, a fusicoccane diterpenoid with an unprecedented tricyclic 5/8/6 ring system. This is MFS-type transporter tndD from Aspergillus flavipes.